The chain runs to 189 residues: Frataxin-like protein, mitochondrial (189 aa).

A mitochondrion-targeting transit peptide spans 1-50; it reads MNCARLHQRIPLRAMALTTTSYPALAPSHSFANASTSVMTASAMAVAHRA.

Belongs to the frataxin family. As to quaternary structure, interacts with IscU; the interaction is direct.

It is found in the mitochondrion. The catalysed reaction is 4 Fe(2+) + O2 + 4 H(+) = 4 Fe(3+) + 2 H2O. In terms of biological role, iron-binding protein which binds 2 iron atoms per monomer. Probably, acts as an iron carrier for the biosynthesis of Fe-S clusters. Stimulates the cysteine desulphurase activity of IscS in the presence of IscU. In Leishmania donovani, this protein is Frataxin-like protein, mitochondrial.